A 236-amino-acid chain; its full sequence is Phycobilisome rod-core linker polypeptide cpcG (236 aa).

In terms of domain architecture, PBS-linker spans 11-193 (STQNQRVNGF…LDYNFLYKKN (183 aa)).

The protein belongs to the phycobilisome linker protein family. In terms of assembly, the phycobilisome is a hemidiscoidal structure that is composed of two distinct substructures: a core complex and a number of rods radiating from the core.

The protein localises to the plastid. It is found in the chloroplast. It localises to the chloroplast thylakoid membrane. Its function is as follows. Rod-core linker protein required for attachment of phycocyanin to allophycocyanin in cores of phycobilisomes. In terms of biological role, linker polypeptides determine the state of aggregation and the location of the disk-shaped phycobiliprotein units within the phycobilisome and modulate their spectroscopic properties in order to mediate a directed and optimal energy transfer. The protein is Phycobilisome rod-core linker polypeptide cpcG (cpcG) of Aglaothamnion neglectum (Red alga).